The primary structure comprises 813 residues: Receptor-like protein 48 (813 aa).

A signal peptide spans 1 to 30; that stretch reads MHSCSERRMMTVIWSLCLIFCLSNSILAIA. Residues 31–786 are Extracellular-facing; it reads KDLCLPDQRD…EDEEKEEKNQ (756 aa). N-linked (GlcNAc...) asparagine glycosylation is found at Asn69, Asn105, and Asn123. LRR repeat units lie at residues 111–134, 136–159, and 160–182; these read LQHL…SIGN, KYLR…LGSL, and SYLT…SGGN. Residues Asn195 and Asn216 are each glycosylated (N-linked (GlcNAc...) asparagine). LRR repeat units follow at residues 196 to 219, 220 to 244, 245 to 260, 261 to 285, 288 to 310, 311 to 335, 336 to 359, 361 to 381, 382 to 405, 406 to 432, 434 to 450, 451 to 473, 475 to 498, 500 to 521, 523 to 544, 545 to 571, 572 to 595, 642 to 666, 667 to 690, 691 to 714, and 716 to 739; these read LSSV…NMSS, LSKL…LFMI, PSLN…NISS, HSEL…LSKL, LRDL…IFLH, LKSL…FFSH, LMSL…SFPS, TGTL…LENQ, TSLF…LWRL, PTLS…IYSF, ASDN…VCEL, VSLN…CFEN, KTIS…IISE, LTSL…LIKC, DLEF…WLRS, LSNL…SLSF, PKLR…YFAG, FTIY…IGIL, KELI…LSNL, SNLQ…LGKL, and FLEW…QIQS. N-linked (GlcNAc...) asparagine glycosylation is found at Asn248 and Asn257. N-linked (GlcNAc...) asparagine glycosylation occurs at Asn380. Asn484 carries N-linked (GlcNAc...) asparagine glycosylation. Residues Asn673 and Asn689 are each glycosylated (N-linked (GlcNAc...) asparagine). Asn721 and Asn741 each carry an N-linked (GlcNAc...) asparagine glycan. Residues 756 to 785 are disordered; that stretch reads FLNKCGGEEEEEEEATKQEEDEDEEKEEKN. The segment covering 763–781 has biased composition (acidic residues); it reads EEEEEEEATKQEEDEDEEK. Residues 787-807 form a helical membrane-spanning segment; the sequence is VFSWIAAAIGYVPGVFCGLTI. Residues 808-813 lie on the Cytoplasmic side of the membrane; that stretch reads AHILTS.

Belongs to the RLP family.

It localises to the cell membrane. Its function is as follows. Plays a role in root hair development. The chain is Receptor-like protein 48 from Arabidopsis thaliana (Mouse-ear cress).